A 122-amino-acid chain; its full sequence is uncharacterized protein (122 aa).

An HIT domain is found at 10–120; it reads VFARILRGEI…AGRRLGPMIT (111 aa). A Histidine triad motif motif is present at residues 104–108; that stretch reads HLHIH.

This is an uncharacterized protein from Azospirillum brasilense.